Here is a 340-residue protein sequence, read N- to C-terminus: UDP-3-O-(3-hydroxymyristoyl)glucosamine N-acyltransferase (340 aa).

His-239 serves as the catalytic Proton acceptor.

It belongs to the transferase hexapeptide repeat family. LpxD subfamily. In terms of assembly, homotrimer.

It catalyses the reaction a UDP-3-O-[(3R)-3-hydroxyacyl]-alpha-D-glucosamine + a (3R)-hydroxyacyl-[ACP] = a UDP-2-N,3-O-bis[(3R)-3-hydroxyacyl]-alpha-D-glucosamine + holo-[ACP] + H(+). The enzyme catalyses UDP-3-O-[(3R)-3-hydroxytetradecanoyl]-alpha-D-glucosamine + (3R)-hydroxytetradecanoyl-[ACP] = UDP-2-N,3-O-bis[(3R)-3-hydroxytetradecanoyl]-alpha-D-glucosamine + holo-[ACP] + H(+). Its pathway is glycolipid biosynthesis; lipid IV(A) biosynthesis; lipid IV(A) from (3R)-3-hydroxytetradecanoyl-[acyl-carrier-protein] and UDP-N-acetyl-alpha-D-glucosamine: step 3/6. In terms of biological role, catalyzes the N-acylation of UDP-3-O-(hydroxytetradecanoyl)glucosamine using 3-hydroxytetradecanoyl-ACP as the acyl donor. Is involved in the biosynthesis of lipid A, a phosphorylated glycolipid that anchors the lipopolysaccharide to the outer membrane of the cell. The protein is UDP-3-O-(3-hydroxymyristoyl)glucosamine N-acyltransferase of Yersinia pestis bv. Antiqua (strain Antiqua).